The sequence spans 655 residues: p-hydroxybenzoic acid efflux pump subunit AaeB (655 aa).

The next 11 membrane-spanning stretches (helical) occupy residues 13 to 33 (FAVK…HFQL), 38 to 58 (WAVL…GGEP), 69 to 89 (LRII…ISMI), 93 to 113 (LLMI…SSLV), 121 to 141 (WGLS…EPLL), 152 to 172 (EIVI…PRSI), 370 to 390 (LFWL…IAVV), 407 to 427 (FIYG…VIIP), 431 to 451 (QSML…GIEV), 459 to 479 (MGAL…TFHF), and 482 to 502 (FLDS…VILL).

The protein belongs to the aromatic acid exporter ArAE (TC 2.A.85) family.

It is found in the cell inner membrane. Forms an efflux pump with AaeA. Could function as a metabolic relief valve, allowing to eliminate certain compounds when they accumulate to high levels in the cell. The sequence is that of p-hydroxybenzoic acid efflux pump subunit AaeB from Salmonella arizonae (strain ATCC BAA-731 / CDC346-86 / RSK2980).